A 938-amino-acid chain; its full sequence is Breast cancer type 2 susceptibility protein homolog (938 aa).

2 stretches are compositionally biased toward basic and acidic residues: residues Leu-320 to Ile-339 and Asn-409 to Asn-425. 2 disordered regions span residues Leu-320–Leu-359 and Asn-409–Gln-434. BRCA2 repeat units lie at residues Ala-537 to Tyr-571, Asn-638 to Ala-672, and Ser-713 to Ala-747. The span at Ser-870–Ala-879 shows a compositional bias: polar residues. Positions Ser-870–Tyr-938 are disordered. The segment covering Ala-898 to Ala-915 has biased composition (basic and acidic residues). The span at Lys-926–Tyr-938 shows a compositional bias: basic residues.

In terms of assembly, interacts with Rad9 and spn-A/Rad51.

The protein localises to the nucleus. In terms of biological role, involved in and required for double-strand break repair by meiotic and mitotic homologous recombination. During meiosis, has a dual role in the repair of meiotic double-stranded breaks and the efficient activation of the meiotic recombination checkpoint. This Drosophila sechellia (Fruit fly) protein is Breast cancer type 2 susceptibility protein homolog.